Consider the following 415-residue polypeptide: MDDIKNLIEDLLGGDTVFNNTKILNPEYIPSNLPHRENQIKEMTVSFRDLILNPGSSSIRLVIIGRTGTGKSVTTKKFGLKLREIAHERNLRLEYVHVNCHRQRTLYLILQEISQGLRLQLPNRGLSSQETFRIIYDYLEKRNIHLVITLDEFDYFVSTAPLEDIYFLVRVYDELNVTTKRLHYIFIVREITSLSGLDKSIKDHIIKNIIDFPPYKSTELYDILADRVYNEKAFKENSVSEDVLRFIAEVHGFDKGGSGNARISIETLELAGKIADSENSPIVTLEHAKKANSKINPELSALIDSIKELDLHQLIFLKALVLLHDQEGIDFFPIGKIEQRYVELSKNFGEEPRRHTQIFEYVRRMKLMGLINTRQSGRGMRGRTTLVSLPIPISMEFKDLINTEIRKRLEQSRIS.

ATP is bound by residues 69–73, tyrosine 215, and arginine 227; that span reads TGKSV.

Belongs to the CDC6/cdc18 family.

Involved in regulation of DNA replication. This Sulfolobus acidocaldarius (strain ATCC 33909 / DSM 639 / JCM 8929 / NBRC 15157 / NCIMB 11770) protein is ORC1-type DNA replication protein 2 (cdc6-2).